A 444-amino-acid chain; its full sequence is MPSIILPPKPTALQKPHINLAVVGHVDNGKSTLVGRLLYETGYVDEKALKEIEEMAKKIGKEDFAFAWILDRFKEERERGVTIEATHVGFETNKLFITIIDLPGHRDFVKNMIVGASQADAALFVISARPGEFEAAIGPQGQGREHLFLIRTLGVQQIVVAVNKMDVVNYDQKRYEQVKAEVSKLLKLLGYDPSKIHFIPVSAIKGDNIKTKSSNTPWYTGPTLLEVFDSFQPPQRPVDKPLRMPIQDVFTITGAGTVVVGRVETGVLKVGDRVVIVPPAKVGDVRSIETHHMKLEQAQPGDNIGVNVRGIAKEDVKRGDVLGKPDNVPTVAEEIVARIVVLWHPTAIGPGYAPVMHIHTATVPVQITELVSKLDPRTGQAVEQKPQFIKQGDVAIVKIKPLKPVVAEKFSDFPPLGRFALRDMGRTIAAGQILEVKPAQVQIK.

The 224-residue stretch at Lys15 to Val238 folds into the tr-type G domain. The G1 stretch occupies residues Gly24–Ser31. Gly24–Ser31 contacts GTP. Residue Ser31 participates in Mg(2+) binding. The segment at Gly80–Glu84 is G2. The interval Asp101–Gly104 is G3. Residues Asp101–His105 and Asn163–Asp166 each bind GTP. Residues Asn163–Asp166 form a G4 region. The segment at Ser202–Ile204 is G5.

The protein belongs to the TRAFAC class translation factor GTPase superfamily. Classic translation factor GTPase family. EF-Tu/EF-1A subfamily.

It localises to the cytoplasm. The catalysed reaction is GTP + H2O = GDP + phosphate + H(+). Functionally, GTP hydrolase that promotes the GTP-dependent binding of aminoacyl-tRNA to the A-site of ribosomes during protein biosynthesis. This is Elongation factor 1-alpha from Pyrobaculum aerophilum (strain ATCC 51768 / DSM 7523 / JCM 9630 / CIP 104966 / NBRC 100827 / IM2).